The sequence spans 234 residues: uncharacterized protein (234 aa).

Positions 212-234 (GKHLKLDSNTTENKTTKQNETGG) are disordered. Low complexity predominate over residues 220–234 (NTTENKTTKQNETGG).

This is an uncharacterized protein from Methanothermobacter thermautotrophicus (Methanobacterium thermoformicicum).